The following is a 408-amino-acid chain: Putative transporter AmpG 2 (408 aa).

Helical transmembrane passes span 11–31, 49–69, 84–104, 110–130, 154–174, 177–197, 224–244, 261–281, 294–311, 353–373, and 382–402; these read IFNI…YLLT, IGLF…GPLL, YCLV…TSFN, IPFV…DMLI, FRIG…IISW, VYRT…FYPL, CIVI…LSIM, VGYK…GGFL, VLIY…LYFL, IALI…ISGY, and YFFI…LYLP.

Belongs to the major facilitator superfamily.

It is found in the cell inner membrane. The protein is Putative transporter AmpG 2 (ampG2) of Rickettsia prowazekii (strain Madrid E).